The primary structure comprises 37 residues: Large ribosomal subunit protein bL36c (37 aa).

It belongs to the bacterial ribosomal protein bL36 family.

The protein localises to the plastid. In Aneura mirabilis (Parasitic liverwort), this protein is Large ribosomal subunit protein bL36c.